A 442-amino-acid polypeptide reads, in one-letter code: Probable alpha-galactosidase B (442 aa).

Positions M1 to A19 are cleaved as a signal peptide. Intrachain disulfides connect C42-C74 and C124-C154. The Nucleophile role is filled by D152. N159, N173, N179, and N215 each carry an N-linked (GlcNAc...) asparagine glycan. E224–A228 lines the substrate pocket. N-linked (GlcNAc...) asparagine glycosylation is present at N235. The Proton donor role is filled by D246. Residue N285 is glycosylated (N-linked (GlcNAc...) asparagine).

This sequence belongs to the glycosyl hydrolase 27 family.

The protein localises to the secreted. It catalyses the reaction Hydrolysis of terminal, non-reducing alpha-D-galactose residues in alpha-D-galactosides, including galactose oligosaccharides, galactomannans and galactolipids.. In terms of biological role, hydrolyzes a variety of simple alpha-D-galactoside as well as more complex molecules such as oligosaccharides and polysaccharides. The polypeptide is Probable alpha-galactosidase B (aglB) (Aspergillus oryzae (strain ATCC 42149 / RIB 40) (Yellow koji mold)).